We begin with the raw amino-acid sequence, 1624 residues long: MKELSVHVRQQTRALLHKILLKKWRRKRESLLEWSIPIIIGLHMGLFSYLARNIQVLEVPPQDLGSLNEFNGSSLVVVYTPISNITQQIMNKTTFAPTMKGTRIIGVPSIEDLDEVLLHNIPDALGVIFNDSFSYQLKVLRMYGNPFLKEDLLAHCWDTHSQAFCSLSKYWERGFVALQTAINAGIIEVTTNHSVMEELMSIDGINMKTLPFIPRDLSDYEIFILFCLLYFSSFIYFASSNVTKERKQCKEVMKVMGLQDSAFWLSWGLIYVGFIFIISIFIAIIITSTQIIMMTGFLVIFTLFFLYGLSLIAVTFLMAVLLQKAVLTNLIVLFFTLFWGCVGFTVLHKELPPSLEWVLSIFSPFAFTSGMAKVIFQDYNLNGVVFPDPSGESYVMIAVFFILAFDSLLYLVLALYFDKILLYGAEHRSAPLFFLNPTSCFRKTANRNKVIERDLDPELPSDEYFEPVDPEYQGKEAIRIRNIKKEYKGKSGKVKALKGLFLDIYESQITAILGHSGAGKSSLLNILSGLYVPTAGSVTVYNKNLSDMQDLKEIRKAIGVCPQHNVQFDALTVKENLTLFAKIKGILPQDVEQEVQQILSELDMQNIRDDLAEHLSEGQKRKLTFGIATVGDPQILLLDEPTVGLDPFSRQRIWGFLKERRADHVILFSTQFMDEADILADRKVLIANGALKCTGSSVFLKRKWGLGYHLSLFMDETCDSERLTSFINHHIPYAKLKAKTKEKLVYILPLERTSEFPEFFSDLDKYSGQGLMSYEVSMSTLNDVFLNLEGEPSTKQDFEKRETATDSESLNDMEVAYPSLSQVQETVSTMSLWRMQVCAIARLRILKLKRERKAFLIILLLLGIALLPLVIEYVANALLEVKNNWEFKTDLYFLSPGQLPQGLRTSLLVINNTESNIEDFLQSLKHQNIVLEVDDFENRNATNSLSYNGAIIVSGRQKDYRFSAVCNTKRLHCFPILMNVISNGILHMLNHTQYIRIKEDIFSPFIVLVWTGIQETCLFILCVICSLSPHIAMSSVSDYKKKADSQLWISGLYPSAYWCGQAVVDISLFSGMLLTSYFTSYTSKLLNIDMTSEIVFSVIVLALGCAASLVFLTYVISFVFGKRKKNSTLWSICFLLVIAITFEKVANGPFNEALVISATMLVPSFALNGLLVVLEMRAYQYYIEFEEIKHGLSAVDLLLCLIPYIHTLLFIFVLRCLELKYGKNVVRRDPIFRIAPQSLKAQPNPEEPIDEDENVQAERLRTSDALSTPNLDEKPVIIASCLHKEYAGQKKHCCSRRTRNMAVRNVSFCVNKGEILGLLGPDGAGKSSSIRMIAGITKPTAGQVELKRLSSAVGHQGDSRAEFGYCPQENGLWPNLTVKEHLELYAAVKGLRKEDAVVAISRLVNALKLHDQLNVQVQNLVAGATRKLCFVLSILGNSPVLILDEPSTGLDVSGKHQVWQAIQAVVKDNEKGVLLSTHDLAEAEALCDRAAIMVSGRLRCIGPIQHLKRKFGQDYVLELRVKDVSQEPLVHREILKLFPQAARQDRCFSLLTYKLPVTDVHPLSQAFHKLEAVKHGFDLEDYSLSQCTLDRVILELSKEQELGTVYEEADMTLGRKLLPPSDEL.

The helical transmembrane segment at 31–51 (LLEWSIPIIIGLHMGLFSYLA) threads the bilayer. 2 N-linked (GlcNAc...) asparagine glycosylation sites follow: asparagine 84 and asparagine 91. Helical transmembrane passes span 222–242 (IFIL…SSNV), 267–287 (WGLI…IIIT), 297–317 (FLVI…VTFL), 326–346 (VLTN…GFTV), 356–376 (EWVL…KVIF), and 395–415 (VMIA…VLAL). The 236-residue stretch at 478-713 (IRIRNIKKEY…WGLGYHLSLF (236 aa)) folds into the ABC transporter 1 domain. 514 to 521 (GHSGAGKS) lines the ATP pocket. N-linked (GlcNAc...) asparagine glycosylation occurs at asparagine 576. 8 consecutive transmembrane segments (helical) span residues 854–874 (AFLI…IEYV), 971–991 (LHCF…MLNH), 1005–1025 (FIVL…CVIC), 1058–1078 (WCGQ…TSYF), 1094–1114 (IVFS…FLTY), 1130–1150 (WSIC…NGPF), 1154–1174 (LVIS…LVVL), and 1194–1214 (AVDL…IFVL). An ABC transporter 2 domain is found at 1282-1520 (LHKEYAGQKK…FGQDYVLELR (239 aa)). 1320–1327 (GPDGAGKS) serves as a coordination point for ATP.

The protein belongs to the ABC transporter superfamily. ABCA family. As to expression, widely expressed with higher expression in heart, lung, brain, spleen and testis.

The protein resides in the golgi apparatus membrane. In terms of biological role, probable transporter which may play a role in macrophage lipid transport and homeostasis. The protein is ATP-binding cassette sub-family A member 6 (Abca6) of Mus musculus (Mouse).